A 213-amino-acid chain; its full sequence is Non-structural protein NP-1 (213 aa).

The interval 1-80 (MERSRSPRET…ATRKETATKK (80 aa)) is disordered. 2 stretches are compositionally biased toward basic and acidic residues: residues 15–33 (SRDK…ERTR) and 43–58 (AHGE…REKN).

This sequence belongs to the Bocaparvovirus Non-structural protein NP-1 family.

It is found in the host nucleus. Its function is as follows. Required for the expression of the capsid proteins. Performs the splicing and internal polyadenylation of the viral capsid-encoding mRNA precursor, which allows its maturation and expression. Transactivates the viral promoter. The sequence is that of Non-structural protein NP-1 (NP1) from Bos taurus (Bovine).